Reading from the N-terminus, the 60-residue chain is Beta-defensin 11 (60 aa).

The first 22 residues, 1–22 (MRLHHLLLALLFLVLSAGSGIS), serve as a signal peptide directing secretion. 3 disulfides stabilise this stretch: cysteine 27-cysteine 56, cysteine 34-cysteine 49, and cysteine 39-cysteine 57.

The protein belongs to the beta-defensin family. In terms of tissue distribution, neutrophilic granules.

The protein localises to the secreted. Functionally, has bactericidal activity. Active against E.coli ML35 and S.aureus 502A. This chain is Beta-defensin 11 (DEFB11), found in Bos taurus (Bovine).